The following is a 226-amino-acid chain: Calcium-binding protein 1 (226 aa).

Residue glycine 2 is the site of N-myristoyl glycine attachment. Cysteine 4 carries S-palmitoyl cysteine lipidation. EF-hand domains lie at 81–116, 135–152, 158–193, and 195–226; these read EEIEELREAFREFDKDKDGYINCRDLGNCMRTMGYM, GHVDFDDFVELMGPKLLA, IGVKELRDAFREFDTNGDGEISTSELREAMRKLLGH, and VGHRDIEEIIRDVDLNGDGRVDFEEFVRMMSR. The Ca(2+) site is built by aspartate 94, aspartate 96, aspartate 98, tyrosine 100, and aspartate 105. Ca(2+) is bound by residues aspartate 171, asparagine 173, aspartate 175, and glutamate 177. Serine 179 carries the phosphoserine modification. Residues glutamate 182, aspartate 208, asparagine 210, aspartate 212, arginine 214, and glutamate 219 each contribute to the Ca(2+) site.

In terms of assembly, homodimer. Interacts (via C-terminus) with ITPR1, ITPR2 and ITPR3. This binding is calcium dependent and the interaction correlates with calcium concentration. An additional calcium-independent interaction with the N-terminus of ITPR1 results in a decreased InsP(3) binding to the receptor. Interacts with CACNA1A (via C-terminal CDB motif) in the pre- and postsynaptic membranes. Interacts with CACNA1C (via C-terminal C and IQ motifs). Interacts with CACNA1D. The binding to the C motif is calcium independent whereas the binding to IQ requires the presence of calcium and is mutually exclusive with calmodulin binding. Interacts with TRPC5 (via C-terminus). Interacts (via EF-hands 1 and 2) at microtubules with MAP1LC3B. Interacts with MYO1C. Interacts (via EF-hands 1 and 2) with NSMF (via the central NLS-containing motif region), the interaction occurs in a calcium dependent manner after synaptic NMDA receptor stimulation and prevents nuclear import of NSMF. Interacts with SPACA9. Post-translationally, phosphorylated. The phosphorylation regulates the activity.

The protein resides in the cytoplasm. It is found in the cytoskeleton. It localises to the perinuclear region. Its subcellular location is the cell membrane. The protein localises to the golgi apparatus. The protein resides in the postsynaptic density. Its function is as follows. Modulates calcium-dependent activity of inositol 1,4,5-triphosphate receptors (ITPRs). Inhibits agonist-induced intracellular calcium signaling. Enhances inactivation and does not support calcium-dependent facilitation of voltage-dependent P/Q-type calcium channels. Causes calcium-dependent facilitation and inhibits inactivation of L-type calcium channels by binding to the same sites as calmodulin in the C-terminal domain of CACNA1C, but has an opposite effect on channel function. Suppresses the calcium-dependent inactivation of CACNA1D. Inhibits TRPC5 channels. Prevents NMDA receptor-induced cellular degeneration. Required for the normal transfer of light signals through the retina. The sequence is that of Calcium-binding protein 1 (CABP1) from Bos taurus (Bovine).